Here is a 296-residue protein sequence, read N- to C-terminus: UPF0761 membrane protein YE0031 (296 aa).

Transmembrane regions (helical) follow at residues 44–64 (LLSL…FPMF), 67–87 (ISIK…GDII), 108–128 (GLIV…NIIW), 136–156 (LVFS…LVGA), 185–205 (LFPL…VPTV), 212–232 (ALIG…GFTM), and 246–266 (VLAV…IVLL).

This sequence belongs to the UPF0761 family.

The protein resides in the cell inner membrane. This is UPF0761 membrane protein YE0031 from Yersinia enterocolitica serotype O:8 / biotype 1B (strain NCTC 13174 / 8081).